The chain runs to 612 residues: DNA damage checkpoint protein 1 (612 aa).

S436 bears the Phosphoserine mark. Positions 576-612 are disordered; that stretch reads GLLNSQNDTSNHKKQDNKEMEDGLGLTQVEKPRGIFD. A compositionally biased stretch (basic and acidic residues) spans 585 to 596; sequence SNHKKQDNKEME.

Belongs to the DDC1 family. Component of the checkpoint clamp complex composed of DDC1, MEC3 and RAD17. The interaction with MEC3 is performed in a RAD17-dependent manner. The checkpoint clamp complex loads onto DNA in an ATP-dependent manner through its interaction with the RFC-RAD4 checkpoint clamp loader complex. Interacts with the DNA polymerase zeta subunit REV7 and DPB11. In terms of processing, phosphorylated during cell cycle S-phase and in response to DNA damage. This phosphorylation is MEC14 dependent. Also hosphorylated by CDC28.

The protein resides in the cytoplasm. It localises to the nucleus. Functionally, component of the checkpoint clamp complex involved in the surveillance mechanism that allows the DNA repair pathways to act to restore the integrity of the DNA prior to DNA synthesis or separation of the replicated chromosomes. Associates with sites of DNA damage and modulates the MEC1 signaling pathway and the activation of RAD53 in response to DNA damage at phase G1. The complex also physically regulates DNA polymerase zeta-dependent mutagenesis by controlling the access of polymerase zeta to damaged DNA. The polypeptide is DNA damage checkpoint protein 1 (DDC1) (Saccharomyces cerevisiae (strain ATCC 204508 / S288c) (Baker's yeast)).